The sequence spans 304 residues: Ribonuclease HII (304 aa).

The disordered stretch occupies residues 1–53; that stretch reads MIRDTKQPIKVPAKPASRSGGKAKTVKPKTVKPKAVKAADGKAASAKASTSKA. Residues 24–35 are compositionally biased toward basic residues; it reads KTVKPKTVKPKA. The segment covering 36-53 has biased composition (low complexity); that stretch reads VKAADGKAASAKASTSKA. In terms of domain architecture, RNase H type-2 spans 96-284; it reads WPIAGCDEAG…VAAAWQKIEG (189 aa). Positions 102, 103, and 193 each coordinate a divalent metal cation.

It belongs to the RNase HII family. Mn(2+) is required as a cofactor. The cofactor is Mg(2+).

It localises to the cytoplasm. It carries out the reaction Endonucleolytic cleavage to 5'-phosphomonoester.. In terms of biological role, endonuclease that specifically degrades the RNA of RNA-DNA hybrids. The chain is Ribonuclease HII from Rhodopseudomonas palustris (strain ATCC BAA-98 / CGA009).